The following is a 1017-amino-acid chain: Probable DNA ligase (1017 aa).

The segment at 1 to 363 (MPWDVKFSHG…PACATPLHAP (363 aa)) is unknown. Residues 326-352 (GIRSSPPQVRAGDATPSSRSSGDAGVA) are disordered. The segment at 364-1017 (DSFARFVAAA…GARPPPAASD (654 aa)) is DNA ligase. E667 provides a ligand contact to ATP. Catalysis depends on K669, which acts as the N6-AMP-lysine intermediate. ATP-binding residues include R674, R689, E717, R860, and K866.

This sequence in the C-terminal section; belongs to the ATP-dependent DNA ligase family. It depends on Mg(2+) as a cofactor.

It catalyses the reaction ATP + (deoxyribonucleotide)n-3'-hydroxyl + 5'-phospho-(deoxyribonucleotide)m = (deoxyribonucleotide)n+m + AMP + diphosphate.. Functionally, DNA ligase that seals nicks in double-stranded DNA during DNA replication, DNA recombination and DNA repair. The chain is Probable DNA ligase (lig) from Opitutus terrae (strain DSM 11246 / JCM 15787 / PB90-1).